The primary structure comprises 331 residues: UPF0284 protein PF0303 (331 aa).

It belongs to the UPF0284 family.

This is UPF0284 protein PF0303 from Pyrococcus furiosus (strain ATCC 43587 / DSM 3638 / JCM 8422 / Vc1).